Consider the following 345-residue polypeptide: D-fructose 1,6-bisphosphatase class 2/sedoheptulose 1,7-bisphosphatase (345 aa).

4 residues coordinate Mn(2+): D33, E57, D97, and E100. Residues 100–102, Y131, 176–178, and 198–200 each bind substrate; these read EGT, RPR, and DGD. E225 contacts Mn(2+).

This sequence belongs to the FBPase class 2 family. In terms of assembly, homotetramer. The cofactor is Mn(2+).

It catalyses the reaction beta-D-fructose 1,6-bisphosphate + H2O = beta-D-fructose 6-phosphate + phosphate. It carries out the reaction D-sedoheptulose 1,7-bisphosphate + H2O = D-sedoheptulose 7-phosphate + phosphate. Its pathway is carbohydrate biosynthesis; Calvin cycle. Functionally, catalyzes the hydrolysis of fructose 1,6-bisphosphate (Fru 1,6-P2) and sedoheptulose 1,7-bisphosphate (Sed 1,7-P2) to fructose 6-phosphate and sedoheptulose 7-phosphate, respectively. The chain is D-fructose 1,6-bisphosphatase class 2/sedoheptulose 1,7-bisphosphatase from Synechocystis sp. (strain ATCC 27184 / PCC 6803 / Kazusa).